Consider the following 121-residue polypeptide: Protein TusC (121 aa).

Belongs to the DsrF/TusC family. As to quaternary structure, heterohexamer, formed by a dimer of trimers. The hexameric TusBCD complex contains 2 copies each of TusB, TusC and TusD. The TusBCD complex interacts with TusE.

The protein resides in the cytoplasm. In terms of biological role, part of a sulfur-relay system required for 2-thiolation of 5-methylaminomethyl-2-thiouridine (mnm(5)s(2)U) at tRNA wobble positions. The protein is Protein TusC of Yersinia pestis bv. Antiqua (strain Antiqua).